The primary structure comprises 141 residues: Nucleoside diphosphate kinase (141 aa).

Lys11, Phe59, Arg87, Thr93, Arg104, and Asn114 together coordinate ATP. Residue His117 is the Pros-phosphohistidine intermediate of the active site.

The protein belongs to the NDK family. In terms of assembly, homotetramer. Mg(2+) serves as cofactor.

The protein localises to the cytoplasm. The enzyme catalyses a 2'-deoxyribonucleoside 5'-diphosphate + ATP = a 2'-deoxyribonucleoside 5'-triphosphate + ADP. The catalysed reaction is a ribonucleoside 5'-diphosphate + ATP = a ribonucleoside 5'-triphosphate + ADP. Major role in the synthesis of nucleoside triphosphates other than ATP. The ATP gamma phosphate is transferred to the NDP beta phosphate via a ping-pong mechanism, using a phosphorylated active-site intermediate. The polypeptide is Nucleoside diphosphate kinase (Mannheimia succiniciproducens (strain KCTC 0769BP / MBEL55E)).